The sequence spans 330 residues: Ketol-acid reductoisomerase (NADP(+)) (330 aa).

The KARI N-terminal Rossmann domain occupies 2–182 (IHVYYDKDAN…GCTKAGVIET (181 aa)). NADP(+) is bound by residues 25 to 28 (YGSQ), R48, S51, S53, and 83 to 86 (DEVQ). H108 is an active-site residue. G134 contributes to the NADP(+) binding site. Positions 183 to 328 (TFKEETETDL…KKLRDMMPWI (146 aa)) constitute a KARI C-terminal knotted domain. Mg(2+)-binding residues include D191, E195, E227, and E231. S252 contributes to the substrate binding site.

It belongs to the ketol-acid reductoisomerase family. Mg(2+) is required as a cofactor.

It catalyses the reaction (2R)-2,3-dihydroxy-3-methylbutanoate + NADP(+) = (2S)-2-acetolactate + NADPH + H(+). The enzyme catalyses (2R,3R)-2,3-dihydroxy-3-methylpentanoate + NADP(+) = (S)-2-ethyl-2-hydroxy-3-oxobutanoate + NADPH + H(+). It participates in amino-acid biosynthesis; L-isoleucine biosynthesis; L-isoleucine from 2-oxobutanoate: step 2/4. Its pathway is amino-acid biosynthesis; L-valine biosynthesis; L-valine from pyruvate: step 2/4. In terms of biological role, involved in the biosynthesis of branched-chain amino acids (BCAA). Catalyzes an alkyl-migration followed by a ketol-acid reduction of (S)-2-acetolactate (S2AL) to yield (R)-2,3-dihydroxy-isovalerate. In the isomerase reaction, S2AL is rearranged via a Mg-dependent methyl migration to produce 3-hydroxy-3-methyl-2-ketobutyrate (HMKB). In the reductase reaction, this 2-ketoacid undergoes a metal-dependent reduction by NADPH to yield (R)-2,3-dihydroxy-isovalerate. This Halothermothrix orenii (strain H 168 / OCM 544 / DSM 9562) protein is Ketol-acid reductoisomerase (NADP(+)).